The chain runs to 483 residues: Glutamate--tRNA ligase (483 aa).

A 'HIGH' region motif is present at residues 9–19 (PSPTGYLHIGN). The 'KMSKS' region motif lies at 250-254 (KLSKR). Lysine 253 provides a ligand contact to ATP.

It belongs to the class-I aminoacyl-tRNA synthetase family. Glutamate--tRNA ligase type 1 subfamily. As to quaternary structure, monomer.

It localises to the cytoplasm. The catalysed reaction is tRNA(Glu) + L-glutamate + ATP = L-glutamyl-tRNA(Glu) + AMP + diphosphate. Functionally, catalyzes the attachment of glutamate to tRNA(Glu) in a two-step reaction: glutamate is first activated by ATP to form Glu-AMP and then transferred to the acceptor end of tRNA(Glu). In Blochmanniella floridana, this protein is Glutamate--tRNA ligase.